The chain runs to 305 residues: Translation initiation factor eIF2B subunit alpha (305 aa).

N6-acetyllysine is present on lysine 35.

It belongs to the eIF-2B alpha/beta/delta subunits family. As to quaternary structure, component of the translation initiation factor 2B (eIF2B) complex which is a heterodecamer of two sets of five different subunits: alpha, beta, gamma, delta and epsilon. Subunits alpha, beta and delta comprise a regulatory subcomplex and subunits epsilon and gamma comprise a catalytic subcomplex. Within the complex, the hexameric regulatory complex resides at the center, with the two heterodimeric catalytic subcomplexes bound on opposite sides.

The protein localises to the cytoplasm. The protein resides in the cytosol. Activated by the chemical integrated stress response (ISR) inhibitor ISRIB which stimulates guanine nucleotide exchange factor activity for both phosphorylated and unphosphorylated eIF2. In terms of biological role, acts as a component of the translation initiation factor 2B (eIF2B) complex, which catalyzes the exchange of GDP for GTP on eukaryotic initiation factor 2 (eIF2) gamma subunit. Its guanine nucleotide exchange factor activity is repressed when bound to eIF2 complex phosphorylated on the alpha subunit, thereby limiting the amount of methionyl-initiator methionine tRNA available to the ribosome and consequently global translation is repressed. The polypeptide is Translation initiation factor eIF2B subunit alpha (EIF2B1) (Macaca fascicularis (Crab-eating macaque)).